The sequence spans 189 residues: dTTP/UTP pyrophosphatase (189 aa).

Residue aspartate 64 is the Proton acceptor of the active site.

The protein belongs to the Maf family. YhdE subfamily. The cofactor is a divalent metal cation.

It is found in the cytoplasm. It carries out the reaction dTTP + H2O = dTMP + diphosphate + H(+). It catalyses the reaction UTP + H2O = UMP + diphosphate + H(+). Nucleoside triphosphate pyrophosphatase that hydrolyzes dTTP and UTP. May have a dual role in cell division arrest and in preventing the incorporation of modified nucleotides into cellular nucleic acids. The chain is dTTP/UTP pyrophosphatase from Syntrophomonas wolfei subsp. wolfei (strain DSM 2245B / Goettingen).